We begin with the raw amino-acid sequence, 29 residues long: GLPICGETCFTGTCNTPGCSCTYPICTRD.

Positions 1–29 (GLPICGETCFTGTCNTPGCSCTYPICTRD) form a cross-link, cyclopeptide (Gly-Asp). 3 disulfide bridges follow: Cys5–Cys19, Cys9–Cys21, and Cys14–Cys26.

Post-translationally, this is a cyclic peptide.

Its function is as follows. Probably participates in a plant defense mechanism. The chain is Cyclotide psyleio A from Psychotria brachyceras.